The primary structure comprises 188 residues: ATP synthase subunit b 1 (188 aa).

The chain crosses the membrane as a helical span at residues 35-55; that stretch reads VHFGSHLFWLAISFGLFYLFI.

Belongs to the ATPase B chain family. As to quaternary structure, F-type ATPases have 2 components, F(1) - the catalytic core - and F(0) - the membrane proton channel. F(1) has five subunits: alpha(3), beta(3), gamma(1), delta(1), epsilon(1). F(0) has three main subunits: a(1), b(2) and c(10-14). The alpha and beta chains form an alternating ring which encloses part of the gamma chain. F(1) is attached to F(0) by a central stalk formed by the gamma and epsilon chains, while a peripheral stalk is formed by the delta and b chains.

It localises to the cell inner membrane. Its function is as follows. F(1)F(0) ATP synthase produces ATP from ADP in the presence of a proton or sodium gradient. F-type ATPases consist of two structural domains, F(1) containing the extramembraneous catalytic core and F(0) containing the membrane proton channel, linked together by a central stalk and a peripheral stalk. During catalysis, ATP synthesis in the catalytic domain of F(1) is coupled via a rotary mechanism of the central stalk subunits to proton translocation. Component of the F(0) channel, it forms part of the peripheral stalk, linking F(1) to F(0). This is ATP synthase subunit b 1 from Bartonella henselae (strain ATCC 49882 / DSM 28221 / CCUG 30454 / Houston 1) (Rochalimaea henselae).